A 304-amino-acid polypeptide reads, in one-letter code: Coenzyme PQQ synthesis protein B (304 aa).

The protein belongs to the PqqB family.

Its pathway is cofactor biosynthesis; pyrroloquinoline quinone biosynthesis. Functionally, may be involved in the transport of PQQ or its precursor to the periplasm. In Azoarcus sp. (strain BH72), this protein is Coenzyme PQQ synthesis protein B.